Here is a 381-residue protein sequence, read N- to C-terminus: Nitric oxide reductase FlRd-NAD(+) reductase (381 aa).

It belongs to the FAD-dependent oxidoreductase family. The cofactor is FAD.

The protein localises to the cytoplasm. The catalysed reaction is 2 reduced [nitric oxide reductase rubredoxin domain] + NAD(+) + H(+) = 2 oxidized [nitric oxide reductase rubredoxin domain] + NADH. It participates in nitrogen metabolism; nitric oxide reduction. Functionally, one of at least two accessory proteins for anaerobic nitric oxide (NO) reductase. Reduces the rubredoxin moiety of NO reductase. The chain is Nitric oxide reductase FlRd-NAD(+) reductase from Aliivibrio fischeri (strain ATCC 700601 / ES114) (Vibrio fischeri).